Here is a 381-residue protein sequence, read N- to C-terminus: Ceropsin (381 aa).

At 1 to 62 (MSISMDAGPG…MNPLWHALLG (62 aa)) the chain is on the extracellular side. N-linked (GlcNAc...) asparagine glycosylation occurs at Asn-28. Residues 63–83 (FTIGVLGFISMMGNGMVIYIF) form a helical membrane-spanning segment. At 84-96 (MTTKNLKTPSNLL) the chain is on the cytoplasmic side. Residues 97-117 (VVNLAFSDFLMMCAMSPAMVI) form a helical membrane-spanning segment. Over 118–133 (NCYNETWVFGPFACEL) the chain is Extracellular. N-linked (GlcNAc...) asparagine glycosylation is present at Asn-121. Cys-131 and Cys-208 form a disulfide bridge. A helical membrane pass occupies residues 134 to 154 (YGCAGSLFGCASIWTMTMIAF). Over 155 to 173 (DRYNVIVKGIAAKPMTNNG) the chain is Cytoplasmic. Residues 174 to 194 (ALLRILGIWAFSLAWTVAPFF) traverse the membrane as a helical segment. At 195–221 (GWNRYVPEGNMTACGTDYLTKDWFSRS) the chain is on the extracellular side. The N-linked (GlcNAc...) asparagine glycan is linked to Asn-204. Residues 222-242 (YIVVYSVFVYFAPLLLIVYSY) traverse the membrane as a helical segment. At 243–284 (YYIVQAVSAHEKAMREQAKKMNVASLRSSEAANTSTECKLAK) the chain is on the cytoplasmic side. The chain crosses the membrane as a helical span at residues 285–305 (VALMTISLWFMAWTPYLVINY). Residues 306-316 (TGILESAPISP) are Extracellular-facing. The chain crosses the membrane as a helical span at residues 317-339 (LATIWGSLFAKANAVYNPIVYGI). Residues 340-381 (SHPKYQAALYKRFPVLQCHSTTTDEASSVASGTTVMEEKPTA) lie on the Cytoplasmic side of the membrane.

The protein belongs to the G-protein coupled receptor 1 family. Opsin subfamily. As to expression, expressed bilaterally in dorsal and ventral anterior protocerebral cells and bilaterally in the dorsal posterior protocerebral and lateral posterior tritocerebral cells (at protein level). Expressed in the larval brain but not in the subesophageal ganglion or thoracic ganglion.

It localises to the membrane. Its function is as follows. Visual pigments are the light-absorbing molecules that mediate vision. They consist of an apoprotein, opsin, covalently linked to cis-retinal. May play a role in photoperiodic photoreception. The sequence is that of Ceropsin from Bombyx mori (Silk moth).